Consider the following 253-residue polypeptide: Probable transcriptional regulatory protein AM1_1847 (253 aa).

The protein belongs to the TACO1 family.

The protein resides in the cytoplasm. The sequence is that of Probable transcriptional regulatory protein AM1_1847 from Acaryochloris marina (strain MBIC 11017).